Consider the following 181-residue polypeptide: Large ribosomal subunit protein uL5c (181 aa).

It belongs to the universal ribosomal protein uL5 family. Part of the 50S ribosomal subunit; contacts the 5S rRNA.

It is found in the plastid. In terms of biological role, binds 5S rRNA, forms part of the central protuberance of the 50S subunit. This chain is Large ribosomal subunit protein uL5c (rpl5), found in Helicosporidium sp. subsp. Simulium jonesii (Green alga).